A 513-amino-acid chain; its full sequence is GMP synthase [glutamine-hydrolyzing] (513 aa).

Positions 3–200 (SVLVLDFGSQ…LITIAGITPD (198 aa)) constitute a Glutamine amidotransferase type-1 domain. Cys-80 functions as the Nucleophile in the catalytic mechanism. Active-site residues include His-174 and Glu-176. The 188-residue stretch at 201–388 (WSSKSFIEHQ…LGIAEDILMR (188 aa)) folds into the GMPS ATP-PPase domain. 228–234 (SGGVDST) is an ATP binding site.

As to quaternary structure, homodimer.

It catalyses the reaction XMP + L-glutamine + ATP + H2O = GMP + L-glutamate + AMP + diphosphate + 2 H(+). Its pathway is purine metabolism; GMP biosynthesis; GMP from XMP (L-Gln route): step 1/1. Functionally, catalyzes the synthesis of GMP from XMP. In Pelodictyon phaeoclathratiforme (strain DSM 5477 / BU-1), this protein is GMP synthase [glutamine-hydrolyzing].